The sequence spans 496 residues: Membrane-bound lytic murein transglycosylase F (496 aa).

The signal sequence occupies residues 1–29 (MFFRPDFRPRCAKWLIATGLFLMLGACVE). A non-LT domain region spans residues 30-267 (KPTTLERVKE…RLKDRYYGHV (238 aa)). An LT domain region spans residues 268–496 (DVLGYVGAYT…SGSSPDKPAL (229 aa)). Residue glutamate 314 is part of the active site. The segment at 464–496 (VADGNLHVPGVDKTQPPAPPAPASGSSPDKPAL) is disordered. Residues 486-496 (ASGSSPDKPAL) show a composition bias toward low complexity.

The protein in the N-terminal section; belongs to the bacterial solute-binding protein 3 family. In the C-terminal section; belongs to the transglycosylase Slt family.

Its subcellular location is the cell outer membrane. It carries out the reaction Exolytic cleavage of the (1-&gt;4)-beta-glycosidic linkage between N-acetylmuramic acid (MurNAc) and N-acetylglucosamine (GlcNAc) residues in peptidoglycan, from either the reducing or the non-reducing ends of the peptidoglycan chains, with concomitant formation of a 1,6-anhydrobond in the MurNAc residue.. In terms of biological role, murein-degrading enzyme that degrades murein glycan strands and insoluble, high-molecular weight murein sacculi, with the concomitant formation of a 1,6-anhydromuramoyl product. Lytic transglycosylases (LTs) play an integral role in the metabolism of the peptidoglycan (PG) sacculus. Their lytic action creates space within the PG sacculus to allow for its expansion as well as for the insertion of various structures such as secretion systems and flagella. The sequence is that of Membrane-bound lytic murein transglycosylase F from Pseudomonas savastanoi pv. phaseolicola (strain 1448A / Race 6) (Pseudomonas syringae pv. phaseolicola (strain 1448A / Race 6)).